Consider the following 189-residue polypeptide: Peptidyl-tRNA hydrolase (189 aa).

Tyr15 is a binding site for tRNA. His20 acts as the Proton acceptor in catalysis. TRNA is bound by residues Phe66, Asn68, and Asn114.

This sequence belongs to the PTH family. As to quaternary structure, monomer.

It localises to the cytoplasm. The catalysed reaction is an N-acyl-L-alpha-aminoacyl-tRNA + H2O = an N-acyl-L-amino acid + a tRNA + H(+). In terms of biological role, hydrolyzes ribosome-free peptidyl-tRNAs (with 1 or more amino acids incorporated), which drop off the ribosome during protein synthesis, or as a result of ribosome stalling. Catalyzes the release of premature peptidyl moieties from peptidyl-tRNA molecules trapped in stalled 50S ribosomal subunits, and thus maintains levels of free tRNAs and 50S ribosomes. The polypeptide is Peptidyl-tRNA hydrolase (Streptococcus pneumoniae (strain JJA)).